We begin with the raw amino-acid sequence, 248 residues long: MSQWEKVYGVHAVEALLRHHPKRVKQLWLAEGRHDPRVQVLTELAAGFRIPVGQRDRRELDEWAEGVHQGVVAEVSPSQVWGENMLEELLERSEGVPLLLALDGVTDPHNLGACLRTADAAGVQAVIVPKDKSATLNATVRKVACGAAEVIPLVAVTNLARTLEKLQQRGLWVVGTAGEADKTLYQLDLKGPTVLVMGAEGKGMRRLTREHCDFLARLPMAGSVSSLNVSVATGVCLFEILRQRTPLE.

The S-adenosyl-L-methionine site is built by glycine 198, leucine 218, and leucine 227.

It belongs to the class IV-like SAM-binding methyltransferase superfamily. RNA methyltransferase TrmH family. RlmB subfamily.

It is found in the cytoplasm. It catalyses the reaction guanosine(2251) in 23S rRNA + S-adenosyl-L-methionine = 2'-O-methylguanosine(2251) in 23S rRNA + S-adenosyl-L-homocysteine + H(+). Specifically methylates the ribose of guanosine 2251 in 23S rRNA. The chain is 23S rRNA (guanosine-2'-O-)-methyltransferase RlmB from Pseudomonas aeruginosa (strain ATCC 15692 / DSM 22644 / CIP 104116 / JCM 14847 / LMG 12228 / 1C / PRS 101 / PAO1).